The sequence spans 262 residues: Deaminated glutathione amidase (262 aa).

In terms of domain architecture, CN hydrolase spans Met1–Pro238. Glu40 acts as the Proton acceptor in catalysis. Lys110 functions as the Proton donor in the catalytic mechanism. Catalysis depends on Cys147, which acts as the Nucleophile.

This sequence belongs to the carbon-nitrogen hydrolase superfamily. NIT1/NIT2 family.

The enzyme catalyses N-(4-oxoglutaryl)-L-cysteinylglycine + H2O = L-cysteinylglycine + 2-oxoglutarate. Hydrolyzes deaminated glutathione (dGSH) to 2-oxoglutarate and L-cysteinylglycine, and no activity on glutathione or L-glutamine. May function as a metabolite repair enzyme. The polypeptide is Deaminated glutathione amidase (ybeM) (Escherichia coli O157:H7).